A 799-amino-acid chain; its full sequence is High affinity nerve growth factor receptor (799 aa).

Positions 1–32 are cleaved as a signal peptide; sequence MLRGQRHGQLGWHRPAAGLGGLVTSLMLACAC. The Extracellular portion of the chain corresponds to 33–418; sequence AASCRETCCP…DPVEKKDETP (386 aa). 2 disulfide bridges follow: C36/C41 and C40/C50. N67 is a glycosylation site (N-linked (GlcNAc...) asparagine). 2 LRR repeats span residues 90-113 and 116-137; these read LGELRSLTIVKSGLRFVAPDAFHF and RLSHLNLSSNALESLSWKTVQG. N121, N190, N204, N255, N264, N320, N325, N341, N361, and N404 each carry an N-linked (GlcNAc...) asparagine glycan. Residues 148–219 form the LRRCT domain; the sequence is NPLHCSCALL…GDDVFLQCQV (72 aa). A disulfide bond links C154 and C193. Ig-like C2-type domains follow at residues 196–285 and 295–368; these read PSVK…VSVS and AVEQ…LAAN. Cystine bridges form between C217-C267 and C302-C348. A helical membrane pass occupies residues 419–442; that stretch reads FGVSVAVGLAVSAALFLSALLLVL. The Cytoplasmic segment spans residues 443-799; sequence NKCGQRSKFG…APPSYLDVLG (357 aa). The segment at 472-493 is interaction with SQSTM1; the sequence is MTLGGSSLSPTEGKGSGLQGHI. At Y499 the chain carries Phosphotyrosine; by autocatalysis. A Protein kinase domain is found at 513 to 784; it reads IILKWELGEG…LSMKDVHARL (272 aa). ATP contacts are provided by residues 519–527 and K547; that span reads LGEGAFGKV. D653 functions as the Proton acceptor in the catalytic mechanism. Residues Y679, Y683, Y684, and Y794 each carry the phosphotyrosine; by autocatalysis modification.

Belongs to the protein kinase superfamily. Tyr protein kinase family. Insulin receptor subfamily. As to quaternary structure, exists in a dynamic equilibrium between monomeric (low affinity) and dimeric (high affinity) structures. Homodimerization is induced by binding of a NGF dimer. Found in a complex, at least composed of KIDINS220, MAGI2, NTRK1 and RAPGEF2; the complex is mainly formed at late endosomes in a nerve growth factor (NGF)-dependent manner. Interacts with RAPGEF2; the interaction is strengthened after NGF stimulation. Interacts with SQSTM1; bridges NTRK1 to NGFR. Forms a ternary complex with NGFR and KIDINS220; this complex is affected by the expression levels of KIDINS220 and an increase in KIDINS220 expression leads to a decreased association of NGFR and NTRK1. Interacts (phosphorylated upon activation by NGF) with SHC1; mediates SHC1 phosphorylation and activation. Interacts (phosphorylated upon activation by NGF) with PLCG1; mediates PLCG1 phosphorylation and activation. Interacts (phosphorylated) with SH2B1 and SH2B2. Interacts with GRB2. Interacts with PIK3R1. Interacts with FRS2. Interacts with SORT1; may regulate NTRK1 anterograde axonal transport. Interacts with SH2D1A; regulates NTRK1. Interacts with NRADD. Interacts with RAB7A. Interacts with PTPRS. Interacts with USP36; USP36 does not deubiquitinate NTRK1. Interacts with GGA3. Interacts with TSPAN1; this interaction promotes NTRK1 stability. Post-translationally, ligand-mediated autophosphorylation. Interaction with SQSTM1 is phosphotyrosine-dependent. Autophosphorylation at Tyr-499 mediates interaction and phosphorylation of SHC1. N-glycosylated. In terms of processing, ubiquitinated. Undergoes polyubiquitination upon activation; regulated by NGFR. Ubiquitination by NEDD4L leads to degradation. Ubiquitination regulates the internalization of the receptor. In terms of tissue distribution, isoform Trka-II is primarily expressed in neuronal cells; isoform Trka-I is found in non-neuronal tissues.

Its subcellular location is the cell membrane. The protein resides in the early endosome membrane. It localises to the late endosome membrane. It is found in the recycling endosome membrane. The catalysed reaction is L-tyrosyl-[protein] + ATP = O-phospho-L-tyrosyl-[protein] + ADP + H(+). With respect to regulation, the pro-survival signaling effect of NTRK1 in neurons requires its endocytosis into signaling early endosomes and its retrograde axonal transport. This is regulated by different proteins including CFL1, RAC1 and SORT1. NTF3 is unable to induce this signaling probably due to the lability of the NTF3-NTRK1 complex in endosomes. SH2D1A inhibits the autophosphorylation of the receptor, and alters the recruitment and activation of downstream effectors and signaling cascades. Regulated by NGFR. Functionally, receptor tyrosine kinase involved in the development and the maturation of the central and peripheral nervous systems through regulation of proliferation, differentiation and survival of sympathetic and nervous neurons. High affinity receptor for NGF which is its primary ligand. Can also bind and be activated by NTF3/neurotrophin-3. However, NTF3 only supports axonal extension through NTRK1 but has no effect on neuron survival. Upon dimeric NGF ligand-binding, undergoes homodimerization, autophosphorylation and activation. Recruits, phosphorylates and/or activates several downstream effectors including SHC1, FRS2, SH2B1, SH2B2 and PLCG1 that regulate distinct overlapping signaling cascades driving cell survival and differentiation. Through SHC1 and FRS2 activates a GRB2-Ras-MAPK cascade that regulates cell differentiation and survival. Through PLCG1 controls NF-Kappa-B activation and the transcription of genes involved in cell survival. Through SHC1 and SH2B1 controls a Ras-PI3 kinase-AKT1 signaling cascade that is also regulating survival. In absence of ligand and activation, may promote cell death, making the survival of neurons dependent on trophic factors. This chain is High affinity nerve growth factor receptor (Ntrk1), found in Rattus norvegicus (Rat).